Consider the following 404-residue polypeptide: Cysteine desulfurase IscS (404 aa).

Pyridoxal 5'-phosphate contacts are provided by residues 75–76 (AT), N155, Q183, and 203–205 (SAH). K206 is modified (N6-(pyridoxal phosphate)lysine). T243 provides a ligand contact to pyridoxal 5'-phosphate. C328 serves as the catalytic Cysteine persulfide intermediate. C328 provides a ligand contact to [2Fe-2S] cluster.

It belongs to the class-V pyridoxal-phosphate-dependent aminotransferase family. NifS/IscS subfamily. As to quaternary structure, homodimer. Forms a heterotetramer with IscU, interacts with other sulfur acceptors. It depends on pyridoxal 5'-phosphate as a cofactor.

The protein localises to the cytoplasm. It catalyses the reaction (sulfur carrier)-H + L-cysteine = (sulfur carrier)-SH + L-alanine. The protein operates within cofactor biosynthesis; iron-sulfur cluster biosynthesis. Master enzyme that delivers sulfur to a number of partners involved in Fe-S cluster assembly, tRNA modification or cofactor biosynthesis. Catalyzes the removal of elemental sulfur atoms from cysteine to produce alanine. Functions as a sulfur delivery protein for Fe-S cluster synthesis onto IscU, an Fe-S scaffold assembly protein, as well as other S acceptor proteins. The protein is Cysteine desulfurase IscS of Pseudomonas syringae pv. syringae (strain B728a).